The primary structure comprises 450 residues: Chromosomal replication initiator protein DnaA (450 aa).

The interval 1–84 is domain I, interacts with DnaA modulators; it reads MTENEQIFWN…AVDYVYEDNL (84 aa). The tract at residues 84-109 is domain II; that stretch reads LMIEQQHQGQQGYTEQAFQQLPAVQS. The segment at 110-328 is domain III, AAA+ region; that stretch reads DLNPKYSFDN…GALKDISLVA (219 aa). Positions 154, 156, 157, and 158 each coordinate ATP. Positions 329–450 are domain IV, binds dsDNA; that stretch reads NFKQIDTITV…EIETIKNKIK (122 aa).

This sequence belongs to the DnaA family. As to quaternary structure, oligomerizes as a right-handed, spiral filament on DNA at oriC.

The protein localises to the cytoplasm. Functionally, plays an essential role in the initiation and regulation of chromosomal replication. ATP-DnaA binds to the origin of replication (oriC) to initiate formation of the DNA replication initiation complex once per cell cycle. Binds the DnaA box (a 9 base pair repeat at the origin) and separates the double-stranded (ds)DNA. Forms a right-handed helical filament on oriC DNA; dsDNA binds to the exterior of the filament while single-stranded (ss)DNA is stabiized in the filament's interior. The ATP-DnaA-oriC complex binds and stabilizes one strand of the AT-rich DNA unwinding element (DUE), permitting loading of DNA polymerase. After initiation quickly degrades to an ADP-DnaA complex that is not apt for DNA replication. Binds acidic phospholipids. In Streptococcus equi subsp. zooepidemicus (strain H70), this protein is Chromosomal replication initiator protein DnaA.